The following is a 226-amino-acid chain: MDLTYFGHSTFQIETEDVTLLFDPFFEENPHTETDPGTLAPDVLLITHAHFDHFSDVEAVLEASDPLVISNFEITQYVQEEYGHDAIQPLNEGGSVEFDWGYVESTHARHSSSFPDGSYGGVPNGFVLELGDDVVYNTGDTAPFAEMKWVGDLWDVDVMLAPVGNVFTMGIYGALHSTEMVEPELVIPLHYDTFPPLETDLDAFEDAFDEAGYDTRVFGAGETAAL.

The protein belongs to the UPF0173 family.

This Salinibacter ruber (strain DSM 13855 / M31) protein is UPF0173 metal-dependent hydrolase SRU_1937.